We begin with the raw amino-acid sequence, 279 residues long: Oxygen-dependent coproporphyrinogen-III oxidase (279 aa).

Position 102 (serine 102) interacts with substrate. Positions 106 and 116 each coordinate a divalent metal cation. The active-site Proton donor is histidine 116. Residue 118-120 (NTR) coordinates substrate. The a divalent metal cation site is built by histidine 149 and histidine 179. Residues 244–279 (YVEFNLLYDRGTKFGLMTDGNVEAILMSLPPEVKWA) form an important for dimerization region.

Belongs to the aerobic coproporphyrinogen-III oxidase family. In terms of assembly, homodimer. Requires a divalent metal cation as cofactor.

Its subcellular location is the cytoplasm. The catalysed reaction is coproporphyrinogen III + O2 + 2 H(+) = protoporphyrinogen IX + 2 CO2 + 2 H2O. The protein operates within porphyrin-containing compound metabolism; protoporphyrin-IX biosynthesis; protoporphyrinogen-IX from coproporphyrinogen-III (O2 route): step 1/1. Its function is as follows. Involved in the heme biosynthesis. Catalyzes the aerobic oxidative decarboxylation of propionate groups of rings A and B of coproporphyrinogen-III to yield the vinyl groups in protoporphyrinogen-IX. The protein is Oxygen-dependent coproporphyrinogen-III oxidase of Rickettsia bellii (strain OSU 85-389).